We begin with the raw amino-acid sequence, 314 residues long: Probable serine/threonine-protein kinase WNK11 (314 aa).

The tract at residues 1-22 (MMTCASSDDNESEKDKDSESFV) is disordered. One can recognise a Protein kinase domain in the interval 31-289 (GRYGELLGSG…AAELLCDPFF (259 aa)). 111–114 (TEIC) provides a ligand contact to ATP. Asp-178 functions as the Proton acceptor in the catalytic mechanism. Residues 295–314 (DDDEDGENNDNNGAGRIVVS) are disordered.

Belongs to the protein kinase superfamily. Ser/Thr protein kinase family. WNK subfamily.

It carries out the reaction L-seryl-[protein] + ATP = O-phospho-L-seryl-[protein] + ADP + H(+). The enzyme catalyses L-threonyl-[protein] + ATP = O-phospho-L-threonyl-[protein] + ADP + H(+). In terms of biological role, may regulate flowering time by modulating the photoperiod pathway. This is Probable serine/threonine-protein kinase WNK11 (WNK11) from Arabidopsis thaliana (Mouse-ear cress).